Consider the following 466-residue polypeptide: Phosphoenolpyruvate carboxykinase (ATP) (466 aa).

Substrate contacts are provided by arginine 61, tyrosine 196, and lysine 202. Residues lysine 202, histidine 221, and glycine 237–threonine 245 contribute to the ATP site. Residues lysine 202 and histidine 221 each coordinate Mn(2+). Aspartate 258 contributes to the Mn(2+) binding site. The ATP site is built by glutamate 286, arginine 323, and threonine 448. Residue arginine 323 coordinates substrate.

It belongs to the phosphoenolpyruvate carboxykinase (ATP) family. The cofactor is Mn(2+).

The protein localises to the cytoplasm. It carries out the reaction oxaloacetate + ATP = phosphoenolpyruvate + ADP + CO2. Its pathway is carbohydrate biosynthesis; gluconeogenesis. Its function is as follows. Involved in the gluconeogenesis. Catalyzes the conversion of oxaloacetate (OAA) to phosphoenolpyruvate (PEP) through direct phosphoryl transfer between the nucleoside triphosphate and OAA. The sequence is that of Phosphoenolpyruvate carboxykinase (ATP) from Deinococcus radiodurans (strain ATCC 13939 / DSM 20539 / JCM 16871 / CCUG 27074 / LMG 4051 / NBRC 15346 / NCIMB 9279 / VKM B-1422 / R1).